A 615-amino-acid chain; its full sequence is Probable transporter mch1 (615 aa).

A disordered region spans residues 1–35 (MTGSIGQAPAIDKRDFDINRRSSTPHETAAQEDEA). A compositionally biased stretch (basic and acidic residues) spans 11–20 (IDKRDFDINR). Residues 84–104 (FVWGVITCLGAGSITAFSLYG) form a helical membrane-spanning segment. A glycan (N-linked (GlcNAc...) asparagine) is linked at asparagine 112. 5 helical membrane-spanning segments follow: residues 120 to 140 (EVSIAAGISMYLPVSLAGYLC), 147 to 167 (PLTLFAGIAFGLGYSLAAFVY), 182 to 202 (FWVMVVAFIAIGVATCSMYLA), 218 to 238 (GIILAVPIAAFGLSGMWQSQV), and 261 to 281 (FLFLAILLLTIGVIGTFALRI). Asparagine 329 is a glycosylation site (N-linked (GlcNAc...) asparagine). The next 6 membrane-spanning stretches (helical) occupy residues 371–391 (IFLADHTMWWLALGFFLVTGP), 428–448 (IIALTSTIARLLTGSLSDLFA), 477–497 (LAFLIPSALLLSLGFLLLASP), 512–532 (LVGLGYGSIFSLVPIIISVVW), 538–558 (GTNWGIVAMFPAAGAAMWGVI), and 583–603 (FGFWSIGCTFSVWVAIVAWLV).

The protein belongs to the major facilitator superfamily.

It localises to the vacuole membrane. Probable transporter. The protein is Probable transporter mch1 (mch1) of Emericella nidulans (strain FGSC A4 / ATCC 38163 / CBS 112.46 / NRRL 194 / M139) (Aspergillus nidulans).